We begin with the raw amino-acid sequence, 254 residues long: Gamma-glutamyl-gamma-aminobutyrate hydrolase (254 aa).

The Glutamine amidotransferase type-1 domain maps to 16 to 250 (RNRLKGHATQ…ITAWQHHIAE (235 aa)). The Nucleophile role is filled by Cys114. Catalysis depends on residues His222 and Glu224.

Belongs to the peptidase C26 family.

The enzyme catalyses 4-(gamma-L-glutamylamino)butanoate + H2O = 4-aminobutanoate + L-glutamate. Its pathway is amine and polyamine degradation; putrescine degradation; 4-aminobutanoate from putrescine: step 4/4. In terms of biological role, involved in the breakdown of putrescine via hydrolysis of the gamma-glutamyl linkage of gamma-glutamyl-gamma-aminobutyrate. This chain is Gamma-glutamyl-gamma-aminobutyrate hydrolase (puuD), found in Shigella flexneri.